Consider the following 242-residue polypeptide: Biosynthetic peptidoglycan transglycosylase (242 aa).

A helical transmembrane segment spans residues 19 to 39 (ILAALAVFWGGGIALFSVVPV).

Belongs to the glycosyltransferase 51 family.

Its subcellular location is the cell inner membrane. It carries out the reaction [GlcNAc-(1-&gt;4)-Mur2Ac(oyl-L-Ala-gamma-D-Glu-L-Lys-D-Ala-D-Ala)](n)-di-trans,octa-cis-undecaprenyl diphosphate + beta-D-GlcNAc-(1-&gt;4)-Mur2Ac(oyl-L-Ala-gamma-D-Glu-L-Lys-D-Ala-D-Ala)-di-trans,octa-cis-undecaprenyl diphosphate = [GlcNAc-(1-&gt;4)-Mur2Ac(oyl-L-Ala-gamma-D-Glu-L-Lys-D-Ala-D-Ala)](n+1)-di-trans,octa-cis-undecaprenyl diphosphate + di-trans,octa-cis-undecaprenyl diphosphate + H(+). It participates in cell wall biogenesis; peptidoglycan biosynthesis. Peptidoglycan polymerase that catalyzes glycan chain elongation from lipid-linked precursors. The polypeptide is Biosynthetic peptidoglycan transglycosylase (Salmonella typhi).